We begin with the raw amino-acid sequence, 354 residues long: UDP-3-O-acylglucosamine N-acyltransferase (354 aa).

H257 (proton acceptor) is an active-site residue. The interval 335 to 354 is disordered; the sequence is AQQVSKSKLRGRNPGGKQND.

This sequence belongs to the transferase hexapeptide repeat family. LpxD subfamily. In terms of assembly, homotrimer.

The enzyme catalyses a UDP-3-O-[(3R)-3-hydroxyacyl]-alpha-D-glucosamine + a (3R)-hydroxyacyl-[ACP] = a UDP-2-N,3-O-bis[(3R)-3-hydroxyacyl]-alpha-D-glucosamine + holo-[ACP] + H(+). It functions in the pathway bacterial outer membrane biogenesis; LPS lipid A biosynthesis. Its function is as follows. Catalyzes the N-acylation of UDP-3-O-acylglucosamine using 3-hydroxyacyl-ACP as the acyl donor. Is involved in the biosynthesis of lipid A, a phosphorylated glycolipid that anchors the lipopolysaccharide to the outer membrane of the cell. In Rhizobium etli (strain ATCC 51251 / DSM 11541 / JCM 21823 / NBRC 15573 / CFN 42), this protein is UDP-3-O-acylglucosamine N-acyltransferase.